Reading from the N-terminus, the 67-residue chain is uncharacterized protein (67 aa).

2 helical membrane passes run 13–32 and 42–64; these read IACLRSLSIKILIICHGFIV and RLTNFFSIMILLTFSNFSRTLGL.

It localises to the membrane. This is an uncharacterized protein from Saccharomyces cerevisiae (strain ATCC 204508 / S288c) (Baker's yeast).